We begin with the raw amino-acid sequence, 304 residues long: Acetyl-coenzyme A carboxylase carboxyl transferase subunit beta (304 aa).

Positions 23 to 292 (VWTKCDSCGQ…PNPEAPREGV (270 aa)) constitute a CoA carboxyltransferase N-terminal domain. Residues cysteine 27, cysteine 30, cysteine 46, and cysteine 49 each contribute to the Zn(2+) site. Residues 27–49 (CDSCGQVLYRAELERNLEVCPKC) form a C4-type zinc finger. Residues 284–304 (NPEAPREGVVVPPVPDQEPEA) are disordered. Residues 295–304 (PPVPDQEPEA) are compositionally biased toward pro residues.

It belongs to the AccD/PCCB family. In terms of assembly, acetyl-CoA carboxylase is a heterohexamer composed of biotin carboxyl carrier protein (AccB), biotin carboxylase (AccC) and two subunits each of ACCase subunit alpha (AccA) and ACCase subunit beta (AccD). Requires Zn(2+) as cofactor.

Its subcellular location is the cytoplasm. The enzyme catalyses N(6)-carboxybiotinyl-L-lysyl-[protein] + acetyl-CoA = N(6)-biotinyl-L-lysyl-[protein] + malonyl-CoA. It functions in the pathway lipid metabolism; malonyl-CoA biosynthesis; malonyl-CoA from acetyl-CoA: step 1/1. In terms of biological role, component of the acetyl coenzyme A carboxylase (ACC) complex. Biotin carboxylase (BC) catalyzes the carboxylation of biotin on its carrier protein (BCCP) and then the CO(2) group is transferred by the transcarboxylase to acetyl-CoA to form malonyl-CoA. The protein is Acetyl-coenzyme A carboxylase carboxyl transferase subunit beta of Shigella flexneri serotype 5b (strain 8401).